Here is a 103-residue protein sequence, read N- to C-terminus: Trp operon repressor homolog (103 aa).

Residues 59-82 (QRQISQMLGVGIATITRGSNELKS) mediate DNA binding.

It belongs to the TrpR family. As to quaternary structure, homodimer.

Its subcellular location is the cytoplasm. In terms of biological role, this protein is an aporepressor. When complexed with L-tryptophan it binds the operator region of the trp operon and prevents the initiation of transcription. The polypeptide is Trp operon repressor homolog (Vibrio parahaemolyticus serotype O3:K6 (strain RIMD 2210633)).